Reading from the N-terminus, the 335-residue chain is Carboxylesterase 1 (335 aa).

The Involved in the stabilization of the negatively charged intermediate by the formation of the oxyanion hole signature appears at 90-92 (HGG). Paraoxon is bound by residues 92 to 93 (GG), Ser-169, and Ala-170. Ser-169 is a catalytic residue. Residues Asp-276 and His-306 contribute to the active site.

The protein belongs to the 'GDXG' lipolytic enzyme family.

The catalysed reaction is a carboxylic ester + H2O = an alcohol + a carboxylate + H(+). Is inhibited by the organophosphates paraoxon and dimethylchlorophosphate (DMCP). Its function is as follows. Carboxylesterase acting on esters with varying acyl chain length. The polypeptide is Carboxylesterase 1 (CXE1) (Actinidia eriantha (Velvet vine)).